Here is a 140-residue protein sequence, read N- to C-terminus: Translation initiation factor 2 subunit beta (140 aa).

It belongs to the eIF-2-beta/eIF-5 family. As to quaternary structure, heterotrimer composed of an alpha, a beta and a gamma chain.

In terms of biological role, eIF-2 functions in the early steps of protein synthesis by forming a ternary complex with GTP and initiator tRNA. The polypeptide is Translation initiation factor 2 subunit beta (Metallosphaera sedula (strain ATCC 51363 / DSM 5348 / JCM 9185 / NBRC 15509 / TH2)).